We begin with the raw amino-acid sequence, 356 residues long: Cell division control protein 10 (356 aa).

One can recognise a Septin-type G domain in the interval 36 to 286 (KGFELNVLVV…NNYRKKIFEI (251 aa)). A G1 motif region spans residues 46–53 (GRRGLGTS). Residues 46 to 53 (GRRGLGTS) and T70 contribute to the GTP site. The interval 93-96 (TYHE) is G3 motif. The tract at residues 163-166 (PKAD) is G4 motif. Residues 164 to 172 (KADMYTPDE) and R235 contribute to the GTP site.

The protein belongs to the TRAFAC class TrmE-Era-EngA-EngB-Septin-like GTPase superfamily. Septin GTPase family. As to quaternary structure, component of the septin complex.

Septins are GTPases involved in cytokinesis. The septins localize to the site of cleavage and act as a structural scaffold that recruits different components involved in diverse processes at specific stages during the cell cycle. Septins are also involved in cell morphogenesis, chitin deposition, cell cycle regulation, cell compartmentalization and spore wall formation. The chain is Cell division control protein 10 (CDC10) from Encephalitozoon cuniculi (strain GB-M1) (Microsporidian parasite).